A 76-amino-acid chain; its full sequence is Beta-defensin 121 (76 aa).

The N-terminal stretch at 1–15 is a signal peptide; sequence MKLLLLLLTVTLLLA. Intrachain disulfides connect C23-C50, C30-C44, and C34-C51.

It belongs to the beta-defensin family.

Its subcellular location is the secreted. Functionally, has antibacterial activity. This Pan troglodytes (Chimpanzee) protein is Beta-defensin 121 (DEFB121).